Consider the following 178-residue polypeptide: ATP synthase subunit delta (178 aa).

This sequence belongs to the ATPase delta chain family. F-type ATPases have 2 components, F(1) - the catalytic core - and F(0) - the membrane proton channel. F(1) has five subunits: alpha(3), beta(3), gamma(1), delta(1), epsilon(1). F(0) has three main subunits: a(1), b(2) and c(10-14). The alpha and beta chains form an alternating ring which encloses part of the gamma chain. F(1) is attached to F(0) by a central stalk formed by the gamma and epsilon chains, while a peripheral stalk is formed by the delta and b chains.

It is found in the cell membrane. Functionally, f(1)F(0) ATP synthase produces ATP from ADP in the presence of a proton or sodium gradient. F-type ATPases consist of two structural domains, F(1) containing the extramembraneous catalytic core and F(0) containing the membrane proton channel, linked together by a central stalk and a peripheral stalk. During catalysis, ATP synthesis in the catalytic domain of F(1) is coupled via a rotary mechanism of the central stalk subunits to proton translocation. Its function is as follows. This protein is part of the stalk that links CF(0) to CF(1). It either transmits conformational changes from CF(0) to CF(1) or is implicated in proton conduction. The polypeptide is ATP synthase subunit delta (Streptococcus equi subsp. zooepidemicus (strain H70)).